The sequence spans 164 residues: Peptidyl-prolyl cis-trans isomerase A-like 4G (164 aa).

One can recognise a PPIase cyclophilin-type domain in the interval 7 to 163; sequence FFDITVDGKP…KKITIADCGQ (157 aa).

Belongs to the cyclophilin-type PPIase family. PPIase A subfamily.

Its subcellular location is the cytoplasm. It catalyses the reaction [protein]-peptidylproline (omega=180) = [protein]-peptidylproline (omega=0). Its function is as follows. PPIases accelerate the folding of proteins. It catalyzes the cis-trans isomerization of proline imidic peptide bonds in oligopeptides. This is Peptidyl-prolyl cis-trans isomerase A-like 4G (PPIAL4G) from Homo sapiens (Human).